The sequence spans 244 residues: Phosphoadenosine 5'-phosphosulfate reductase (244 aa).

Cys-239 functions as the Nucleophile; cysteine thiosulfonate intermediate in the catalytic mechanism.

Belongs to the PAPS reductase family. CysH subfamily.

It is found in the cytoplasm. It carries out the reaction [thioredoxin]-disulfide + sulfite + adenosine 3',5'-bisphosphate + 2 H(+) = [thioredoxin]-dithiol + 3'-phosphoadenylyl sulfate. Its pathway is sulfur metabolism; hydrogen sulfide biosynthesis; sulfite from sulfate: step 3/3. Its function is as follows. Catalyzes the formation of sulfite from phosphoadenosine 5'-phosphosulfate (PAPS) using thioredoxin as an electron donor. The chain is Phosphoadenosine 5'-phosphosulfate reductase from Escherichia coli O8 (strain IAI1).